Here is a 363-residue protein sequence, read N- to C-terminus: UDP-N-acetylglucosamine--N-acetylmuramyl-(pentapeptide) pyrophosphoryl-undecaprenol N-acetylglucosamine transferase (363 aa).

Residues 10–12 (TGG), asparagine 124, serine 195, isoleucine 250, and glutamine 295 contribute to the UDP-N-acetyl-alpha-D-glucosamine site.

Belongs to the glycosyltransferase 28 family. MurG subfamily.

The protein resides in the cell membrane. It carries out the reaction di-trans,octa-cis-undecaprenyl diphospho-N-acetyl-alpha-D-muramoyl-L-alanyl-D-glutamyl-meso-2,6-diaminopimeloyl-D-alanyl-D-alanine + UDP-N-acetyl-alpha-D-glucosamine = di-trans,octa-cis-undecaprenyl diphospho-[N-acetyl-alpha-D-glucosaminyl-(1-&gt;4)]-N-acetyl-alpha-D-muramoyl-L-alanyl-D-glutamyl-meso-2,6-diaminopimeloyl-D-alanyl-D-alanine + UDP + H(+). Its pathway is cell wall biogenesis; peptidoglycan biosynthesis. In terms of biological role, cell wall formation. Catalyzes the transfer of a GlcNAc subunit on undecaprenyl-pyrophosphoryl-MurNAc-pentapeptide (lipid intermediate I) to form undecaprenyl-pyrophosphoryl-MurNAc-(pentapeptide)GlcNAc (lipid intermediate II). This is UDP-N-acetylglucosamine--N-acetylmuramyl-(pentapeptide) pyrophosphoryl-undecaprenol N-acetylglucosamine transferase from Halalkalibacterium halodurans (strain ATCC BAA-125 / DSM 18197 / FERM 7344 / JCM 9153 / C-125) (Bacillus halodurans).